The primary structure comprises 281 residues: Fructose-bisphosphate aldolase class 1 (281 aa).

The Schiff-base intermediate with dihydroxyacetone-P role is filled by Lys-191.

The protein belongs to the DeoC/FbaB aldolase family. In terms of assembly, homooctamer.

Its subcellular location is the cytoplasm. The enzyme catalyses beta-D-fructose 1,6-bisphosphate = D-glyceraldehyde 3-phosphate + dihydroxyacetone phosphate. With respect to regulation, activated by citrate. The sequence is that of Fructose-bisphosphate aldolase class 1 (fba) from Pyrococcus abyssi (strain GE5 / Orsay).